Consider the following 306-residue polypeptide: Pyridoxal 5'-phosphate synthase subunit SNZERR (306 aa).

Aspartate 34 contributes to the D-ribose 5-phosphate binding site. Lysine 91 serves as the catalytic Schiff-base intermediate with D-ribose 5-phosphate. Glycine 163 is a D-ribose 5-phosphate binding site. Arginine 175 provides a ligand contact to D-glyceraldehyde 3-phosphate. D-ribose 5-phosphate is bound by residues glycine 224 and 245 to 246 (GS).

Belongs to the PdxS/SNZ family.

The enzyme catalyses aldehydo-D-ribose 5-phosphate + D-glyceraldehyde 3-phosphate + L-glutamine = pyridoxal 5'-phosphate + L-glutamate + phosphate + 3 H2O + H(+). It participates in cofactor biosynthesis; pyridoxal 5'-phosphate biosynthesis. Catalyzes the formation of pyridoxal 5'-phosphate from ribose 5-phosphate (RBP), glyceraldehyde 3-phosphate (G3P) and ammonia. The ammonia is provided by PDX2. Can also use ribulose 5-phosphate and dihydroxyacetone phosphate as substrates, resulting from enzyme-catalyzed isomerization of RBP and G3P, respectively. Also plays an indirect role in resistance to singlet oxygen-generating photosensitizers. The chain is Pyridoxal 5'-phosphate synthase subunit SNZERR (SNZERR) from Suberites domuncula (Sponge).